Here is a 313-residue protein sequence, read N- to C-terminus: Ribosomal RNA small subunit methyltransferase H (313 aa).

S-adenosyl-L-methionine contacts are provided by residues glycine 35–histidine 37, aspartate 55, phenylalanine 81, aspartate 103, and glutamine 110.

Belongs to the methyltransferase superfamily. RsmH family.

Its subcellular location is the cytoplasm. The catalysed reaction is cytidine(1402) in 16S rRNA + S-adenosyl-L-methionine = N(4)-methylcytidine(1402) in 16S rRNA + S-adenosyl-L-homocysteine + H(+). Its function is as follows. Specifically methylates the N4 position of cytidine in position 1402 (C1402) of 16S rRNA. The protein is Ribosomal RNA small subunit methyltransferase H of Pseudomonas aeruginosa (strain ATCC 15692 / DSM 22644 / CIP 104116 / JCM 14847 / LMG 12228 / 1C / PRS 101 / PAO1).